An 846-amino-acid chain; its full sequence is cGMP-dependent protein kinase (846 aa).

The autoinhibitory segment stretch occupies residues 1-22; that stretch reads MRCNERNKKKAIFSNDDFSGED. CNMP-binding domain stretches follow at residues 51–166, 169–268, 288–391, and 411–510; these read VCST…FIDS, VFDM…IVLG, IFRQ…LGDN, and IFRY…LQII. 3',5'-cyclic GMP contacts are provided by Lys106, Gly115, Glu116, Ala118, Arg125, and Ser126. 3',5'-cyclic GMP is bound by residues Arg466, Gly475, Glu476, Ala478, Arg485, and Thr486. Residues 534-791 form the Protein kinase domain; it reads LETERIIGRG…FKDIKEHAFF (258 aa). ATP-binding positions include 540–548 and Lys563; that span reads IGRGTFGTV. Asp657 acts as the Proton acceptor in catalysis. One can recognise an AGC-kinase C-terminal domain in the interval 792 to 846; sequence GNFNWDKLAGRLLEPPLVSKGETYAEDIDIKQIEEEDALNEGEPLDGDDSWDVDF. The disordered stretch occupies residues 824 to 846; it reads IEEEDALNEGEPLDGDDSWDVDF. Residues 825 to 846 show a composition bias toward acidic residues; that stretch reads EEEDALNEGEPLDGDDSWDVDF.

Belongs to the protein kinase superfamily. AGC Ser/Thr protein kinase family. cGMP subfamily. In terms of assembly, monomer. The cofactor is Mg(2+). Post-translationally, autophosphorylated.

Its subcellular location is the cytoplasm. It is found in the endoplasmic reticulum membrane. It carries out the reaction L-seryl-[protein] + ATP = O-phospho-L-seryl-[protein] + ADP + H(+). The catalysed reaction is L-threonyl-[protein] + ATP = O-phospho-L-threonyl-[protein] + ADP + H(+). Its activity is regulated as follows. Activated by cGMP. Not activated by cAMP. cGMP binding allosterically triggers a conformational change at the alpha C-helix of cGMP-binding domain 4, which bridges the regulatory and catalytic domains, causing the capping triad, composed of Arg-477, Gln-525 and Asp-526, to form and stabilize the active conformation. The cGMP-binding domains acts cooperatively to activate PKG. Its function is as follows. Serine/threonine protein kinase which acts as a downstream effector of the second messenger cGMP. Controls the release of Ca(2+) from intracellular stores by regulating phosphoinositide biosynthesis. Ca(2+) signals are essential for merozoite and sporozoite invasion and egress from host hepatocytes and erythrocytes, and, in the mosquito vector, for gametocyte activation, and ookinete and sporozoite motility. During the host liver stage, regulates the initial invasion of host hepatocytes by sporozoites by regulating sporozoite motility and microneme exocytosis. Following parasite development in the hepatocytes, required for the release of merosomes, a vesicle containing the mature merozoites. During the asexual blood stage, required for the progression from schizont to the ring stage following merozoite invasion of host erythrocytes and for merozoite egress. Regulates merozoite egress by promoting the release of exonemes and micronemes which contain proteins essential for egress. Phosphorylates CDPK1 predominantly at the late schizont stage; phosphorylation at 'Ser-64' regulates CDPK1 protein-protein interaction and phosphorylation at 'Thr-231' may regulate CDPK1 kinase activity. In the mosquito vector, required for the initiation of gametogenesis induced by xanthurenic acid, specifically the gametocyte differentiation from the crescent-shaped form to the spherical form. Required for the gliding motility of ookinetes to reach and penetrate the midgut epithelium by promoting Ca(2+)-mediated activation of CDPK1 and CDPK4. Also required for microneme secretion in ookinete by promoting Ca(2+)-mediated activation of CDPK3. The chain is cGMP-dependent protein kinase from Plasmodium vivax (strain Salvador I).